Consider the following 103-residue polypeptide: RNA-binding protein YlxQ (103 aa).

It belongs to the eukaryotic ribosomal protein eL8 family.

Its function is as follows. RNA-binding protein that recognizes the K-turn motif present in ribosomal RNA, but also in box C/D and box C'/D' sRNAs. This Enterococcus faecium (Streptococcus faecium) protein is RNA-binding protein YlxQ.